The sequence spans 530 residues: Estrogen receptor beta (530 aa).

The tract at residues 1 to 148 is modulating; the sequence is MEIKNSPSSL…SPSAKRDAHF (148 aa). Ser-61 carries the post-translational modification Phosphoserine; alternate. Ser-61 carries an O-linked (GlcNAc) serine; alternate glycan. Phosphoserine; by MAPK occurs at positions 87 and 105. 2 consecutive NR C4-type zinc fingers follow at residues 149 to 169 and 185 to 209; these read CAVC…CEGC and CPAT…LRKC. The segment at residues 149 to 214 is a DNA-binding region (nuclear receptor); sequence CAVCSDYASG…RLRKCYEVGM (66 aa). In terms of domain architecture, NR LBD spans 264–498; that stretch reads SPEQLVLTLL…DLLLEMLNAH (235 aa). A compositionally biased stretch (polar residues) spans 506-515; it reads SISGSECCST. Positions 506–530 are disordered; that stretch reads SISGSECCSTEDSKSKEGSQNLQSQ.

The protein belongs to the nuclear hormone receptor family. NR3 subfamily. Binds DNA as a homodimer. Can form a heterodimer with ESR1. Interacts with NCOA1, NCOA3, NCOA5 and NCOA6 coactivators, leading to a strong increase of transcription of target genes. Interacts with UBE1C and AKAP13. Interacts with DNTTIP2. Interacts with CCDC62 in the presence of estradiol/E2; this interaction seems to enhance the transcription of target genes. Interacts with DNAAF4. Interacts with PRMT2. Interacts with CCAR2 (via N-terminus) in a ligand-independent manner. Interacts with RBM39, in the presence of estradiol (E2). Interacts with STUB1/CHIP. Phosphorylation at Ser-87 and Ser-105 recruits NCOA1. In terms of tissue distribution, expressed in prostate, ovary, Leydig cells and in epithelium of the efferent ductules and of the initial segment of the epididymis.

The protein resides in the nucleus. Nuclear hormone receptor. Binds estrogens with an affinity similar to that of ESR1/ER-alpha, and activates expression of reporter genes containing estrogen response elements (ERE) in an estrogen-dependent manner. The protein is Estrogen receptor beta (Esr2) of Mus musculus (Mouse).